Reading from the N-terminus, the 62-residue chain is DNA-directed RNA polymerase subunit Rpo10 (62 aa).

Positions 6, 9, 43, and 44 each coordinate Zn(2+).

The protein belongs to the archaeal Rpo10/eukaryotic RPB10 RNA polymerase subunit family. Part of the RNA polymerase complex. The cofactor is Zn(2+).

It is found in the cytoplasm. The catalysed reaction is RNA(n) + a ribonucleoside 5'-triphosphate = RNA(n+1) + diphosphate. DNA-dependent RNA polymerase (RNAP) catalyzes the transcription of DNA into RNA using the four ribonucleoside triphosphates as substrates. The chain is DNA-directed RNA polymerase subunit Rpo10 from Methanosarcina mazei (strain ATCC BAA-159 / DSM 3647 / Goe1 / Go1 / JCM 11833 / OCM 88) (Methanosarcina frisia).